The sequence spans 332 residues: GTP 3',8-cyclase (332 aa).

The Radical SAM core domain occupies 7 to 221; that stretch reads QYERLHDYVR…FDLCKQAGLD (215 aa). Position 16 (Arg16) interacts with GTP. Residues Cys23 and Cys27 each contribute to the [4Fe-4S] cluster site. Tyr29 provides a ligand contact to S-adenosyl-L-methionine. Cys30 lines the [4Fe-4S] cluster pocket. GTP is bound at residue Arg66. Position 70 (Gly70) interacts with S-adenosyl-L-methionine. Thr97 provides a ligand contact to GTP. Ser121 is a binding site for S-adenosyl-L-methionine. Lys158 contacts GTP. Residue Met192 coordinates S-adenosyl-L-methionine. Positions 256 and 259 each coordinate [4Fe-4S] cluster. 261 to 263 contacts GTP; that stretch reads RLR. [4Fe-4S] cluster is bound at residue Cys273.

Belongs to the radical SAM superfamily. MoaA family. As to quaternary structure, monomer and homodimer. The cofactor is [4Fe-4S] cluster.

The enzyme catalyses GTP + AH2 + S-adenosyl-L-methionine = (8S)-3',8-cyclo-7,8-dihydroguanosine 5'-triphosphate + 5'-deoxyadenosine + L-methionine + A + H(+). It participates in cofactor biosynthesis; molybdopterin biosynthesis. Its function is as follows. Catalyzes the cyclization of GTP to (8S)-3',8-cyclo-7,8-dihydroguanosine 5'-triphosphate. This chain is GTP 3',8-cyclase, found in Limosilactobacillus fermentum (strain NBRC 3956 / LMG 18251) (Lactobacillus fermentum).